We begin with the raw amino-acid sequence, 101 residues long: Large ribosomal subunit protein bL9m (101 aa).

A mitochondrion-targeting transit peptide spans 1–32 (MSIMKPTTRFFRFNSLELAVSPFQRIYGQLRF).

It belongs to the bacterial ribosomal protein bL9 family. As to quaternary structure, component of the mitochondrial large ribosomal subunit (mt-LSU). Mature yeast 74S mitochondrial ribosomes consist of a small (37S) and a large (54S) subunit. The 37S small subunit contains a 15S ribosomal RNA (15S mt-rRNA) and at least 32 different proteins. The 54S large subunit contains a 21S rRNA (21S mt-rRNA) and at least 45 different proteins.

The protein resides in the mitochondrion. Its function is as follows. Component of the mitochondrial ribosome (mitoribosome), a dedicated translation machinery responsible for the synthesis of mitochondrial genome-encoded proteins, including at least some of the essential transmembrane subunits of the mitochondrial respiratory chain. The mitoribosomes are attached to the mitochondrial inner membrane and translation products are cotranslationally integrated into the membrane. The sequence is that of Large ribosomal subunit protein bL9m from Schizosaccharomyces pombe (strain 972 / ATCC 24843) (Fission yeast).